A 242-amino-acid chain; its full sequence is Pyridoxine 5'-phosphate synthase (242 aa).

Residue Asn-7 participates in 3-amino-2-oxopropyl phosphate binding. 9-10 lines the 1-deoxy-D-xylulose 5-phosphate pocket; that stretch reads DH. Arg-18 is a 3-amino-2-oxopropyl phosphate binding site. His-43 (proton acceptor) is an active-site residue. 1-deoxy-D-xylulose 5-phosphate-binding residues include Arg-45 and His-50. Glu-70 acts as the Proton acceptor in catalysis. Thr-100 is a binding site for 1-deoxy-D-xylulose 5-phosphate. His-190 (proton donor) is an active-site residue. 3-amino-2-oxopropyl phosphate is bound by residues Gly-191 and 212 to 213; that span reads GH.

This sequence belongs to the PNP synthase family. In terms of assembly, homooctamer; tetramer of dimers.

It is found in the cytoplasm. The catalysed reaction is 3-amino-2-oxopropyl phosphate + 1-deoxy-D-xylulose 5-phosphate = pyridoxine 5'-phosphate + phosphate + 2 H2O + H(+). It functions in the pathway cofactor biosynthesis; pyridoxine 5'-phosphate biosynthesis; pyridoxine 5'-phosphate from D-erythrose 4-phosphate: step 5/5. Its function is as follows. Catalyzes the complicated ring closure reaction between the two acyclic compounds 1-deoxy-D-xylulose-5-phosphate (DXP) and 3-amino-2-oxopropyl phosphate (1-amino-acetone-3-phosphate or AAP) to form pyridoxine 5'-phosphate (PNP) and inorganic phosphate. The polypeptide is Pyridoxine 5'-phosphate synthase (Thermodesulfovibrio yellowstonii (strain ATCC 51303 / DSM 11347 / YP87)).